A 266-amino-acid polypeptide reads, in one-letter code: Dihydropteroate synthase (266 aa).

The Pterin-binding domain maps to 12–260 (AAIMGILNVT…DVKANQDIVA (249 aa)). Asn19 is a binding site for Mg(2+). Residues Thr59, Asp93, Asn112, Asp176, Lys212, and 248 to 250 (RVH) contribute to the (7,8-dihydropterin-6-yl)methyl diphosphate site.

This sequence belongs to the DHPS family. As to quaternary structure, homodimer or homotrimer. Mg(2+) is required as a cofactor.

It carries out the reaction (7,8-dihydropterin-6-yl)methyl diphosphate + 4-aminobenzoate = 7,8-dihydropteroate + diphosphate. Its pathway is cofactor biosynthesis; tetrahydrofolate biosynthesis; 7,8-dihydrofolate from 2-amino-4-hydroxy-6-hydroxymethyl-7,8-dihydropteridine diphosphate and 4-aminobenzoate: step 1/2. Its function is as follows. Catalyzes the condensation of para-aminobenzoate (pABA) with 6-hydroxymethyl-7,8-dihydropterin diphosphate (DHPt-PP) to form 7,8-dihydropteroate (H2Pte), the immediate precursor of folate derivatives. The sequence is that of Dihydropteroate synthase (folP) from Streptococcus pyogenes serotype M6 (strain ATCC BAA-946 / MGAS10394).